The chain runs to 146 residues: Lipoprotein signal peptidase (146 aa).

3 consecutive transmembrane segments (helical) span residues Ile6–Leu26, Met50–Leu70, and Tyr82–Ala104. Residues Asp108 and Asp125 contribute to the active site. A helical membrane pass occupies residues Phe123–Pro143.

This sequence belongs to the peptidase A8 family.

It localises to the cell inner membrane. It carries out the reaction Release of signal peptides from bacterial membrane prolipoproteins. Hydrolyzes -Xaa-Yaa-Zaa-|-(S,diacylglyceryl)Cys-, in which Xaa is hydrophobic (preferably Leu), and Yaa (Ala or Ser) and Zaa (Gly or Ala) have small, neutral side chains.. The protein operates within protein modification; lipoprotein biosynthesis (signal peptide cleavage). This protein specifically catalyzes the removal of signal peptides from prolipoproteins. The protein is Lipoprotein signal peptidase of Sulfurovum sp. (strain NBC37-1).